The following is a 294-amino-acid chain: Autophagy protein 5 (294 aa).

Residue K149 forms a Glycyl lysine isopeptide (Lys-Gly) (interchain with G-Cter in ATG12) linkage.

This sequence belongs to the ATG5 family. As to quaternary structure, conjugated with ATG12. The ATG5-ATG12 conjugate forms a complex with several units of ATG16. The ATG12-ATG5 conjugate also associates with ATG3. Post-translationally, conjugated to ATG12; which is essential for autophagy. Conjugation with ATG12 involves ATG7 as an E1-like activating enzyme and ATG10 as an E2-like conjugating enzyme.

The protein localises to the preautophagosomal structure membrane. Its function is as follows. Involved in cytoplasm to vacuole transport (Cvt) and autophagic vesicle formation. Autophagy is essential for maintenance of amino acid levels and protein synthesis under nitrogen starvation. Required for selective autophagic degradation of the nucleus (nucleophagy). Also required for mitophagy, which eliminates defective or superfluous mitochondria in order to fulfill cellular energy requirements and prevent excess ROS production. Conjugation with ATG12, through a ubiquitin-like conjugating system involving ATG7 as an E1-like activating enzyme and ATG10 as an E2-like conjugating enzyme, is essential for its function. The ATG12-ATG5 conjugate acts as an E3-like enzyme which is required for lipidation of ATG8 and ATG8 association to the vesicle membranes. ATG12-ATG5 rearranges the ATG3 catalytic center and enhances its E2 activity. Plays a role in the regulation of filamentous growth and chronological longevity. This chain is Autophagy protein 5 (ATG5), found in Saccharomyces cerevisiae (strain YJM789) (Baker's yeast).